A 192-amino-acid chain; its full sequence is Fe/S biogenesis protein NfuA (192 aa).

C149 and C152 together coordinate [4Fe-4S] cluster.

Belongs to the NfuA family. In terms of assembly, homodimer. It depends on [4Fe-4S] cluster as a cofactor.

Involved in iron-sulfur cluster biogenesis. Binds a 4Fe-4S cluster, can transfer this cluster to apoproteins, and thereby intervenes in the maturation of Fe/S proteins. Could also act as a scaffold/chaperone for damaged Fe/S proteins. The chain is Fe/S biogenesis protein NfuA from Shewanella sp. (strain ANA-3).